Consider the following 96-residue polypeptide: MLKFDIQHFAHKKGGGSTSNGRDSESKRLGAKRADGQFVTGGSILYRQRGTKIYPGTNVGRGGDDTLFAKTDGVVRFERMGRDKKKVSVYPEVQEA.

Residues 1–9 (MLKFDIQHF) constitute a propeptide that is removed on maturation. Residues 1–33 (MLKFDIQHFAHKKGGGSTSNGRDSESKRLGAKR) form a disordered region. Over residues 22 to 33 (RDSESKRLGAKR) the composition is skewed to basic and acidic residues.

This sequence belongs to the bacterial ribosomal protein bL27 family. Post-translationally, the N-terminus is cleaved by ribosomal processing cysteine protease Prp.

This chain is Large ribosomal subunit protein bL27, found in Listeria innocua serovar 6a (strain ATCC BAA-680 / CLIP 11262).